A 199-amino-acid chain; its full sequence is Pneumococcal vaccine antigen A homolog (199 aa).

It localises to the cell surface. This chain is Pneumococcal vaccine antigen A homolog (pvaA), found in Streptococcus pyogenes serotype M3 (strain ATCC BAA-595 / MGAS315).